The sequence spans 661 residues: Threonine--tRNA ligase (661 aa).

Positions 1–64 constitute a TGS domain; sequence MSHSVSLTFP…ADGKIEIVTR (64 aa). A catalytic region spans residues 245-547; it reads DHRRLGREMD…LLENYAGHMP (303 aa). Zn(2+) contacts are provided by Cys341, His392, and His524.

The protein belongs to the class-II aminoacyl-tRNA synthetase family. As to quaternary structure, homodimer. Zn(2+) is required as a cofactor.

It localises to the cytoplasm. The enzyme catalyses tRNA(Thr) + L-threonine + ATP = L-threonyl-tRNA(Thr) + AMP + diphosphate + H(+). Catalyzes the attachment of threonine to tRNA(Thr) in a two-step reaction: L-threonine is first activated by ATP to form Thr-AMP and then transferred to the acceptor end of tRNA(Thr). Also edits incorrectly charged L-seryl-tRNA(Thr). In Sinorhizobium fredii (strain NBRC 101917 / NGR234), this protein is Threonine--tRNA ligase.